Consider the following 559-residue polypeptide: WD repeat-containing protein JIP5 (559 aa).

WD repeat units follow at residues glutamine 26–glutamine 67, alanine 77–lysine 116, arginine 117–lysine 156, aspartate 162–arginine 201, asparagine 207–phenylalanine 247, aspartate 265–glutamine 306, alanine 313–lysine 347, arginine 354–glutamate 394, and aspartate 428–glutamate 470. Disordered stretches follow at residues serine 386 to leucine 500 and glutamate 515 to leucine 559. The segment covering serine 391–serine 417 has biased composition (acidic residues). Positions aspartate 418–aspartate 428 are enriched in basic and acidic residues. Acidic residues predominate over residues aspartate 482 to glutamate 494. Basic and acidic residues predominate over residues glutamate 520–lysine 534. The span at lysine 535–lysine 544 shows a compositional bias: basic residues.

Belongs to the WD repeat WDR55 family.

The protein resides in the nucleus. It is found in the nucleolus. The polypeptide is WD repeat-containing protein JIP5 (JIP5) (Vanderwaltozyma polyspora (strain ATCC 22028 / DSM 70294 / BCRC 21397 / CBS 2163 / NBRC 10782 / NRRL Y-8283 / UCD 57-17) (Kluyveromyces polysporus)).